A 481-amino-acid chain; its full sequence is MVRMTQKRYLEGQVYSVPLIQPDLRREEAVHQITDALQYLEMISTDIFTRVSESVEKNRAHLQSVTDRIKLAQARVQKIKGSKKATKVFSSAKYPAPEKLQDYSSIFTGAVDPASQKRPRIKVQSKLRPLDDKAQQEKLMYLPVCVNTKKRSEDETEEGLGSLPRNVNSVSSLLLFNTTENLYKKYVFLDPLAGAVTKTHTTLETEKEDKPFDAPLSITKREQLERQTAENYFYVPDLGQVPEIDVPSYLPDLPGIADDLMYSADLGPGFAPSVPASNSIPELPSFGTDHDESSGSDSQFKLEAPPPPPPPPPPPPEPTHVPVPPPGTSAAPPPPPPPPPMTADNTDASSPAPPTGTVKGAPSEVVQPSNGRASLLESIRNAGGIGKANLRNVKERKMEKKKQKEQEQVGATVSGGDLMSDLFNKLAMRRKGISGKGPAGQGDSSEAPASSGGAFARMSDVIPPLPAPQQSAADDEDDWEA.

Residues 1 to 54 (MVRMTQKRYLEGQVYSVPLIQPDLRREEAVHQITDALQYLEMISTDIFTRVSES) are required for WASH complex assembly. 2 disordered regions span residues 273-417 (SVPA…SGGD) and 429-481 (RRKG…DWEA). A compositionally biased stretch (pro residues) spans 304–341 (APPPPPPPPPPPPEPTHVPVPPPGTSAAPPPPPPPPPM). The segment at 359–481 (KGAPSEVVQP…AADDEDDWEA (123 aa)) is VCA. The WH2 domain maps to 371–393 (GRASLLESIRNAGGIGKANLRNV). Basic and acidic residues predominate over residues 392–407 (NVKERKMEKKKQKEQE).

It belongs to the WASH1 family. In terms of assembly, component of the WASH complex.

It localises to the early endosome membrane. Its subcellular location is the recycling endosome membrane. Acts as a nucleation-promoting factor at the surface of endosomes, where it recruits and activates the Arp2/3 complex to induce actin polymerization, playing a key role in the fission of tubules that serve as transport intermediates during endosome sorting. This is WASH complex subunit 1 from Danio rerio (Zebrafish).